Here is a 366-residue protein sequence, read N- to C-terminus: Cobalt-precorrin-5B C(1)-methyltransferase (366 aa).

The protein belongs to the CbiD family.

It carries out the reaction Co-precorrin-5B + S-adenosyl-L-methionine = Co-precorrin-6A + S-adenosyl-L-homocysteine. It functions in the pathway cofactor biosynthesis; adenosylcobalamin biosynthesis; cob(II)yrinate a,c-diamide from sirohydrochlorin (anaerobic route): step 6/10. Catalyzes the methylation of C-1 in cobalt-precorrin-5B to form cobalt-precorrin-6A. This chain is Cobalt-precorrin-5B C(1)-methyltransferase, found in Paraburkholderia phymatum (strain DSM 17167 / CIP 108236 / LMG 21445 / STM815) (Burkholderia phymatum).